The sequence spans 210 residues: NADH dehydrogenase [ubiquinone] iron-sulfur protein 8, mitochondrial (210 aa).

A mitochondrion-targeting transit peptide spans 1–34; that stretch reads MRCLTTPVLLRALAQAARAGPPGGRSLHSSAVAA. 2 4Fe-4S ferredoxin-type domains span residues 102 to 131 and 141 to 170; these read RRYP…IEAE and TRYD…EGPN. Residues cysteine 111, cysteine 114, cysteine 117, cysteine 121, cysteine 150, cysteine 153, cysteine 156, and cysteine 160 each contribute to the [4Fe-4S] cluster site.

The protein belongs to the complex I 23 kDa subunit family. In terms of assembly, core subunit of respiratory chain NADH dehydrogenase (Complex I) which is composed of 45 different subunits. This is a component of the iron-sulfur (IP) fragment of the enzyme. Interacts with RAB5IF. [4Fe-4S] cluster is required as a cofactor.

It is found in the mitochondrion inner membrane. It carries out the reaction a ubiquinone + NADH + 5 H(+)(in) = a ubiquinol + NAD(+) + 4 H(+)(out). Its function is as follows. Core subunit of the mitochondrial membrane respiratory chain NADH dehydrogenase (Complex I) which catalyzes electron transfer from NADH through the respiratory chain, using ubiquinone as an electron acceptor. Essential for the catalytic activity and assembly of complex I. The chain is NADH dehydrogenase [ubiquinone] iron-sulfur protein 8, mitochondrial (NDUFS8) from Gorilla gorilla gorilla (Western lowland gorilla).